The following is a 148-amino-acid chain: Deoxyuridine 5'-triphosphate nucleotidohydrolase (148 aa).

Ser-69, Gly-82, Asp-85, Tyr-88, Arg-137, Phe-142, and Gly-143 together coordinate dUMP.

It belongs to the dUTPase family. As to quaternary structure, homotrimer. Mg(2+) is required as a cofactor.

The enzyme catalyses dUTP + H2O = dUMP + diphosphate + H(+). The protein operates within pyrimidine metabolism; dUMP biosynthesis; dUMP from dCTP (dUTP route): step 2/2. Functionally, involved in nucleotide metabolism via production of dUMP, the immediate precursor of thymidine nucleotides, and decreases the intracellular concentration of dUTP so that uracil cannot be incorporated into DNA. The protein is Deoxyuridine 5'-triphosphate nucleotidohydrolase (DUT1) of Kluyveromyces lactis (strain ATCC 8585 / CBS 2359 / DSM 70799 / NBRC 1267 / NRRL Y-1140 / WM37) (Yeast).